We begin with the raw amino-acid sequence, 191 residues long: GDP-mannose pyrophosphatase (191 aa).

GDP-alpha-D-mannose contacts are provided by residues Tyr-17, 38–40, Arg-67, and 85–87; these read KRE and AGL. A Nudix hydrolase domain is found at 43-180; that stretch reads DRGNGATILL…EIRDGKTVLL (138 aa). Ala-85, Glu-100, and Glu-104 together coordinate Mg(2+). The Nudix box signature appears at 86–106; the sequence is GLLDNDEPEVCIRKEAIEETG. Residues Glu-104, Glu-127, 150 to 151, and Lys-176 each bind GDP-alpha-D-mannose; that span reads DE. Glu-151 is a Mg(2+) binding site.

Belongs to the Nudix hydrolase family. NudK subfamily. In terms of assembly, homodimer. Mg(2+) is required as a cofactor.

It catalyses the reaction GDP-alpha-D-mannose + H2O = alpha-D-mannose 1-phosphate + GMP + 2 H(+). Functionally, nucleoside diphosphate sugar hydrolase that hydrolyzes GDP-mannose as its preferred substrate, yielding GMP and mannose-1-phosphate. The protein is GDP-mannose pyrophosphatase (nudK) of Escherichia coli (strain K12 / DH10B).